We begin with the raw amino-acid sequence, 81 residues long: Large ribosomal subunit protein bL27 (81 aa).

Residues 1–11 (MATSKSGGSSK) are compositionally biased toward polar residues. Positions 1-21 (MATSKSGGSSKNGRDSISKRL) are disordered.

This sequence belongs to the bacterial ribosomal protein bL27 family.

The protein is Large ribosomal subunit protein bL27 of Borrelia hermsii (strain HS1 / DAH).